The chain runs to 306 residues: Ribonuclease H2 subunit B (306 aa).

A disordered region spans residues 232 to 285; sequence LPDLSSPTPEPPVKKRKVSEAPVEAEEDYTKFNSDSKNKKSNSKMTAAQKSLAK. The span at 259–269 shows a compositional bias: basic and acidic residues; that stretch reads DYTKFNSDSKN.

This sequence belongs to the RNase H2 subunit B family. In terms of assembly, the RNase H2 complex is a heterotrimer composed of the catalytic subunit rnaseh2a and the non-catalytic subunits rnaseh2b and rnaseh2c.

It is found in the nucleus. In terms of biological role, non catalytic subunit of RNase H2, an endonuclease that specifically degrades the RNA of RNA:DNA hybrids. Participates in DNA replication, possibly by mediating the removal of lagging-strand Okazaki fragment RNA primers during DNA replication. Mediates the excision of single ribonucleotides from DNA:RNA duplexes. The protein is Ribonuclease H2 subunit B (rnaseh2b) of Xenopus tropicalis (Western clawed frog).